The chain runs to 267 residues: C-type lectin domain family 12 member A (267 aa).

The Cytoplasmic portion of the chain corresponds to 1–43 (MSEEIVYANLKIQDPDKKEETQKSDKCGGKVSADASHSQQKTV). Residues 5–10 (IVYANL) carry the ITIM motif motif. Position 7 is a phosphotyrosine (Tyr-7). Residues 44–64 (LILILLCLLLFIGMGVLGGIF) form a helical; Signal-anchor for type II membrane protein membrane-spanning segment. Topologically, residues 65–267 (YTTLATEMIK…VLNGLPEDSR (203 aa)) are extracellular. Asn-98 and Asn-105 each carry an N-linked (GlcNAc...) asparagine glycan. Intrachain disulfides connect Cys-118/Cys-130, Cys-133/Cys-144, Cys-161/Cys-246, and Cys-225/Cys-238. The C-type lectin domain maps to 140 to 247 (YKDSCYSQLN…CTDENNIICE (108 aa)). N-linked (GlcNAc...) asparagine glycosylation is present at Asn-165.

Homodimer; disulfide-linked. Interacts (when the ITIM motif is phosphorylated) with PTPN6 and PTPN11. Phosphorylated at Tyr-7 by SRC in the ITIM motif following ligand-binding, promoting recruitment of tyrosine-protein phosphatases PTPN6 and PTPN11. Mainly expressed in lymphoid tissues. Preferentially expressed in peripheral blood leukocytes; less frequent in thymus, spleen, heart, brain and lung; and undetectable in other tissues.

The protein resides in the cell membrane. Functionally, myeloid inhibitory C-type lectin receptor that acts as a negative regulator of myeloid cell activation. Myeloid cell inhibition is required to limit proinflammatory pathways and protect against excessive inflammation. Specifically recognizes and binds various structures, such as neutrophil extracellular traps (NETs) or monosodium urate crystals. Also acts as a pattern-recognition receptor for pathogen-associated molecules, such as plasmodium hemozoin or mycobacterial micolic acid. Ligand-binding induces phosphorylation of its ITIM motif, followed by recruitment of tyrosine-protein phosphatases PTPN6 and PTPN11, which counteract tyrosine-protein kinase SYK, thereby preventing myeloid cell activation. Acts as a pattern-recognition receptor for NETs in neutrophils: specifically recognizes DNA in NETs, leading to inhibit neutrophil activation and limit further NET formation. This regulation is essential for controlling key neutrophil responses and limit NET-mediated inflammatory conditions. Also recognizes dead cells by acting as a receptor for monosodium urate crystals, leading to down-regulate neutrophil activation. Binding to monosodium urate crystals also promotes the type I interferon response. Acts as an inhibitor of natural killer (NK) cell cytotoxicity. Also acts as an ihibitor of dendritic cell maturation in an IL10-dependent manner. This chain is C-type lectin domain family 12 member A, found in Mus musculus (Mouse).